The following is a 464-amino-acid chain: CD-NTase-associated protein 4 (464 aa).

Residues 1–228 (MSASLLEKQS…FENFICHALE (228 aa)) form an N-terminal endonuclease domain region. A C-terminal SAVED domain region spans residues 229–464 (EDRTQWLSDP…EYMPTAELNI (236 aa)).

It belongs to the Cap4 nuclease family. In terms of assembly, a monomer in the absence of cAAA, in its presence it forms oligomers.

Its activity is regulated as follows. DNase activity is activated upon ligand binding. Its function is as follows. Effector DNase of a CBASS antivirus system. CBASS (cyclic oligonucleotide-based antiphage signaling system) provides immunity against bacteriophage. The CD-NTase protein synthesizes cyclic nucleotides in response to infection; these serve as specific second messenger signals. The signals activate a diverse range of effectors, leading to bacterial cell death and thus abortive phage infection. A type II-C CBASS system. In terms of biological role, probably in the presence of its endogenous cyclic nucleotide (synthesized by the cognate CD-NTase protein in the CBASS operon), or of 2',3',3'-cyclic AMP-AMP-AMP (cAAA) synthesized by Acinetobacter sp. ATCC 27244, endonucleolytically degrades dsDNA in a non-sequence specific manner. It is not activated by other cyclic nucleotides. This Moraxella osloensis protein is CD-NTase-associated protein 4.